The chain runs to 148 residues: Hemoglobin subunit beta-A (148 aa).

The 146-residue stretch at 3–148 folds into the Globin domain; the sequence is DWTDAERAAI…VVSALGRQYH (146 aa). His64 and His93 together coordinate heme b.

This sequence belongs to the globin family. In terms of assembly, heterotetramer of two alpha chains and two beta chains. Red blood cells.

Functionally, involved in oxygen transport from gills to the various peripheral tissues. In Seriola quinqueradiata (Five-ray yellowtail), this protein is Hemoglobin subunit beta-A (hbb1).